Consider the following 643-residue polypeptide: Phosphoenolpyruvate carboxykinase [GTP] (643 aa).

Substrate-binding positions include Arg-102 and Tyr-253–Gly-255. Mn(2+) is bound by residues Lys-262 and His-282. Ser-304 lines the substrate pocket. GTP is bound at residue Ala-305–Asn-310. The active site involves Cys-306. Asp-329 serves as a coordination point for Mn(2+). A substrate-binding site is contributed by Asn-422–Arg-424. Residues Arg-424, Arg-455, and Tyr-548–Asn-551 contribute to the GTP site.

This sequence belongs to the phosphoenolpyruvate carboxykinase [GTP] family. As to quaternary structure, monomer. Mn(2+) is required as a cofactor.

The catalysed reaction is oxaloacetate + GTP = phosphoenolpyruvate + GDP + CO2. In terms of biological role, in parasitic nematodes PEPCK carboxylates phosphoenolpyruvate to oxaloacetate thus introducing the products of glycolysis to mitochondrial metabolism. Functionally, catalyzes the conversion of oxaloacetate (OAA) to phosphoenolpyruvate (PEP), the rate-limiting step in the metabolic pathway that produces glucose from lactate and other precursors derived from the citric acid cycle. This is Phosphoenolpyruvate carboxykinase [GTP] (PEPCK) from Ascaris suum (Pig roundworm).